A 450-amino-acid polypeptide reads, in one-letter code: Class E vacuolar protein-sorting machinery protein HSE1 (450 aa).

The region spanning 15-145 (ATDGKLRSDN…RIRRKWPGLL (131 aa)) is the VHS domain. Disordered stretches follow at residues 141–167 (WPGL…EDQE), 179–212 (FEKS…QTTS), and 374–450 (PNTQ…PPNY). The span at 147 to 167 (EPEKPSKQKVSHQEATDEDQE) shows a compositional bias: basic and acidic residues. The UIM domain occupies 163 to 182 (DEDQELQRALKMSLEEFEKS). Positions 184-196 (QQSNGSAVQSNSL) are enriched in polar residues. A compositionally biased stretch (low complexity) spans 197–209 (QDHNQGQQQPQQQ). The SH3 domain occupies 212 to 271 (SGIRRVRALYDLNANEQDELSFRKGDVIVVLEQVYRDWWRGSLHGKIGIFPLNYVTPITE). Positions 394 to 432 (NNTYQTTNGQYTQHNITPQQQYQVPSQNYQSQPPSMQSN) are enriched in low complexity.

It belongs to the STAM family. As to quaternary structure, component of the ESCRT-0 complex composed of HSE1 and VPS27.

It localises to the endosome membrane. In terms of biological role, component of the ESCRT-0 complex which is the sorting receptor for ubiquitinated cargo proteins at the multivesicular body (MVB). The sequence is that of Class E vacuolar protein-sorting machinery protein HSE1 (HSE1) from Candida glabrata (strain ATCC 2001 / BCRC 20586 / JCM 3761 / NBRC 0622 / NRRL Y-65 / CBS 138) (Yeast).